The sequence spans 474 residues: Adenosylhomocysteinase (474 aa).

Substrate is bound by residues Thr-61, Asp-136, and Glu-196. Position 197–199 (197–199) interacts with NAD(+); sequence TTT. Positions 226 and 230 each coordinate substrate. Residues Asn-231, 260–265, Glu-283, Asn-318, 339–341, and Asn-384 each bind NAD(+); these read GYGDVG and IGH.

It belongs to the adenosylhomocysteinase family. NAD(+) serves as cofactor.

Its subcellular location is the cytoplasm. The enzyme catalyses S-adenosyl-L-homocysteine + H2O = L-homocysteine + adenosine. Its pathway is amino-acid biosynthesis; L-homocysteine biosynthesis; L-homocysteine from S-adenosyl-L-homocysteine: step 1/1. May play a key role in the regulation of the intracellular concentration of adenosylhomocysteine. This is Adenosylhomocysteinase from Ralstonia nicotianae (strain ATCC BAA-1114 / GMI1000) (Ralstonia solanacearum).